Consider the following 757-residue polypeptide: MVPDTACVLLLTLAALGASGQGQSPLGSDLGPQMLRELQETNAALQDVRELLRQQVREITFLKNTVMECDACGMQQSVRTGLPSVRPLLHCAPGFCFPGVACIQTESGARCGPCPAGFTGNGSHCTDVNECNAHPCFPRVRCINTSPGFRCEACPPGYSGPTHQGVGLAFAKANKQVCTDINECETGQHNCVPNSVCINTRGSFQCGPCQPGFVGDQASGCQRRAQRFCPDGSPSECHEHADCVLERDGSRSCVCAVGWAGNGILCGRDTDLDGFPDEKLRCPERQCRKDNCVTVPNSGQEDVDRDGIGDACDPDADGDGVPNEKDNCPLVRNPDQRNTDEDKWGDACDNCRSQKNDDQKDTDQDGRGDACDDDIDGDRIRNQADNCPRVPNSDQKDSDGDGIGDACDNCPQKSNPDQADVDHDFVGDACDSDQDQDGDGHQDSRDNCPTVPNSAQEDSDHDGQGDACDDDDDNDGVPDSRDNCRLVPNPGQEDADRDGVGDVCQDDFDADKVVDKIDVCPENAEVTLTDFRAFQTVVLDPEGDAQIDPNWVVLNQGREIVQTMNSDPGLAVGYTAFNGVDFEGTFHVNTVTDDDYAGFIFGYQDSSSFYVVMWKQMEQTYWQANPFRAVAEPGIQLKAVKSSTGPGEQLRNALWHTGDTESQVRLLWKDPRNVGWKDKKSYRWFLQHRPQVGYIRVRFYEGPELVADSNVVLDTTMRGGRLGVFCFSQENIIWANLRYRCNDTIPEDYETHQLRQA.

Positions 1-20 (MVPDTACVLLLTLAALGASG) are cleaved as a signal peptide. Residues 22-86 (GQSPLGSDLG…SVRTGLPSVR (65 aa)) form a COMP N-terminal region. The EGF-like 1 domain maps to 87–126 (PLLHCAPGFCFPGVACIQTESGARCGPCPAGFTGNGSHCT). Disulfide bonds link Cys91/Cys102, Cys96/Cys111, Cys114/Cys125, Cys131/Cys142, Cys136/Cys151, Cys154/Cys178, Cys184/Cys197, Cys191/Cys206, Cys209/Cys221, Cys229/Cys243, Cys237/Cys253, Cys255/Cys266, Cys282/Cys287, Cys292/Cys312, Cys328/Cys348, Cys351/Cys371, Cys387/Cys407, Cys410/Cys430, Cys448/Cys468, Cys484/Cys504, and Cys520/Cys741. Asn121 carries an N-linked (GlcNAc...) asparagine glycan. The region spanning 127–179 (DVNECNAHPCFPRVRCINTSPGFRCEACPPGYSGPTHQGVGLAFAKANKQVCT) is the EGF-like 2; calcium-binding domain. The EGF-like 3; calcium-binding domain occupies 180–222 (DINECETGQHNCVPNSVCINTRGSFQCGPCQPGFVGDQASGCQ). The EGF-like 4 domain maps to 225 to 267 (AQRFCPDGSPSECHEHADCVLERDGSRSCVCAVGWAGNGILCG). TSP type-3 repeat units follow at residues 268-300 (RDTDLDGFPDEKLRCPERQCRKDNCVTVPNSGQ), 301-336 (EDVDRDGIGDACDPDADGDGVPNEKDNCPLVRNPDQ), 337-359 (RNTDEDKWGDACDNCRSQKNDDQ), 360-395 (KDTDQDGRGDACDDDIDGDRIRNQADNCPRVPNSDQ), 396-418 (KDSDGDGIGDACDNCPQKSNPDQ), 419-456 (ADVDHDFVGDACDSDQDQDGDGHQDSRDNCPTVPNSAQ), 457-492 (EDSDHDGQGDACDDDDDNDGVPDSRDNCRLVPNPGQ), and 493-528 (EDADRDGVGDVCQDDFDADKVVDKIDVCPENAEVTL). Residues 298–503 (SGQEDVDRDG…DADRDGVGDV (206 aa)) are disordered. 2 stretches are compositionally biased toward basic and acidic residues: residues 334-346 (PDQRNTDEDKWGD) and 352-370 (RSQKNDDQKDTDQDGRGDA). A Cell attachment site motif is present at residues 367–369 (RGD). Residues 467-476 (ACDDDDDNDG) are compositionally biased toward acidic residues. Positions 527 to 757 (TLTDFRAFQT…DYETHQLRQA (231 aa)) are mediates cell survival and induction of the IAP family of survival proteins. Residues 532 to 746 (RAFQTVVLDP…LRYRCNDTIP (215 aa)) enclose the TSP C-terminal domain. Asn742 carries an N-linked (GlcNAc...) asparagine glycan.

The protein belongs to the thrombospondin family. In terms of assembly, pentamer; disulfide-linked. Exists in a more compact conformation in the presence of calcium and shows a more extended conformation in the absence of calcium. Interacts with ITGB3, ITGA5 and FN1. Binding to FN1 requires the presence of divalent cations (Ca(2+), Mg(2+) or Mn(2+)). The greatest amount of binding is seen in the presence of Mn(2+). Interacts with MATN1, MATN3, MATN4 and ACAN. Binds heparin, heparan sulfate and chondroitin sulfate. EDTA dimishes significantly its binding to ACAN and abolishes its binding to MATN3, MATN4 and chondroitin sulfate. Interacts with collagen I, II and IX, and interaction with these collagens is dependent on the presence of zinc ions. Interacts with ADAMTS12. Interacts with ITGA7. Ca(2+) is required as a cofactor. Post-translationally, proteolytically cleaved by metalloproteases ADAMTS4 and ADAMTS1 with ADAMTS4 showing more potent activity. Abundantly expressed in the chondrocyte extracellular matrix, and is also found in bone, tendon, ligament and synovium and blood vessels. Increased amounts are produced during late stages of osteoarthritis in the area adjacent to the main defect.

It localises to the secreted. Its subcellular location is the extracellular space. The protein localises to the extracellular matrix. Plays a role in the structural integrity of cartilage via its interaction with other extracellular matrix proteins such as the collagens and fibronectin. Can mediate the interaction of chondrocytes with the cartilage extracellular matrix through interaction with cell surface integrin receptors. Could play a role in the pathogenesis of osteoarthritis. Potent suppressor of apoptosis in both primary chondrocytes and transformed cells. Suppresses apoptosis by blocking the activation of caspase-3 and by inducing the IAP family of survival proteins (BIRC3, BIRC2, BIRC5 and XIAP). Essential for maintaining a vascular smooth muscle cells (VSMCs) contractile/differentiated phenotype under physiological and pathological stimuli. Maintains this phenotype of VSMCs by interacting with ITGA7. The chain is Cartilage oligomeric matrix protein from Homo sapiens (Human).